Consider the following 594-residue polypeptide: UvrABC system protein C (594 aa).

The GIY-YIG domain maps to 14–91; sequence DKPGCYLMKD…IKKHDPKYNV (78 aa). A UVR domain is found at 196-231; it reads SDIKEQLRERMEKAAEDLDFERAKELRDTIAQMEKV.

It belongs to the UvrC family. Interacts with UvrB in an incision complex.

The protein resides in the cytoplasm. Functionally, the UvrABC repair system catalyzes the recognition and processing of DNA lesions. UvrC both incises the 5' and 3' sides of the lesion. The N-terminal half is responsible for the 3' incision and the C-terminal half is responsible for the 5' incision. This Shouchella clausii (strain KSM-K16) (Alkalihalobacillus clausii) protein is UvrABC system protein C.